Here is a 161-residue protein sequence, read N- to C-terminus: Cyclic pyranopterin monophosphate synthase (161 aa).

Substrate contacts are provided by residues 75–77 and 113–114; these read LCH and ME. Residue Asp-128 is part of the active site.

It belongs to the MoaC family. Homohexamer; trimer of dimers.

The enzyme catalyses (8S)-3',8-cyclo-7,8-dihydroguanosine 5'-triphosphate = cyclic pyranopterin phosphate + diphosphate. It participates in cofactor biosynthesis; molybdopterin biosynthesis. Functionally, catalyzes the conversion of (8S)-3',8-cyclo-7,8-dihydroguanosine 5'-triphosphate to cyclic pyranopterin monophosphate (cPMP). The protein is Cyclic pyranopterin monophosphate synthase of Salmonella typhi.